The primary structure comprises 216 residues: Cytidylate kinase (216 aa).

Residue 7–15 participates in ATP binding; the sequence is GPSGTGKST.

The protein belongs to the cytidylate kinase family. Type 1 subfamily.

The protein localises to the cytoplasm. The catalysed reaction is CMP + ATP = CDP + ADP. It carries out the reaction dCMP + ATP = dCDP + ADP. This is Cytidylate kinase from Chlamydia felis (strain Fe/C-56) (Chlamydophila felis).